We begin with the raw amino-acid sequence, 166 residues long: Transcriptional repressor NrdR (166 aa).

A zinc finger spans residues 3–34; the sequence is CIKCGNMEDKVIDSRPIKEGKSIRRRRECLRC. One can recognise an ATP-cone domain in the interval 49-139; sequence LFVKKRNGSI…VYCKFHDAKD (91 aa).

Belongs to the NrdR family. It depends on Zn(2+) as a cofactor.

Its function is as follows. Negatively regulates transcription of bacterial ribonucleotide reductase nrd genes and operons by binding to NrdR-boxes. This Methylacidiphilum infernorum (isolate V4) (Methylokorus infernorum (strain V4)) protein is Transcriptional repressor NrdR.